The primary structure comprises 380 residues: Glucose-1-phosphate adenylyltransferase (380 aa).

Alpha-D-glucose 1-phosphate is bound by residues Gly164, Glu179–Lys180, and Ser190.

The protein belongs to the bacterial/plant glucose-1-phosphate adenylyltransferase family. In terms of assembly, homotetramer.

It carries out the reaction alpha-D-glucose 1-phosphate + ATP + H(+) = ADP-alpha-D-glucose + diphosphate. It participates in glycan biosynthesis; glycogen biosynthesis. In terms of biological role, involved in the biosynthesis of ADP-glucose, a building block required for the elongation reactions to produce glycogen. Catalyzes the reaction between ATP and alpha-D-glucose 1-phosphate (G1P) to produce pyrophosphate and ADP-Glc. This is Glucose-1-phosphate adenylyltransferase from Streptococcus pneumoniae serotype 2 (strain D39 / NCTC 7466).